The following is a 709-amino-acid chain: Coiled-coil domain-containing protein 13 (709 aa).

Coiled-coil stretches lie at residues 70–97 (IFEK…NGRL), 139–178 (ELSK…ASAK), and 206–288 (EVKA…QRQN). Phosphoserine is present on Ser-258. The interval 281 to 312 (KQLGQRQNKPAGSSSSEVPLSSDSRKMTAQEK) is disordered. Residues 293–302 (SSSSEVPLSS) are compositionally biased toward low complexity. Positions 323-457 (DKQESWEKLA…ELEIGQLSVQ (135 aa)) form a coiled coil. Disordered stretches follow at residues 462–499 (KGGG…LGSS), 512–542 (SALT…QAQA), and 600–641 (KMRL…SSTQ). Phosphoserine is present on residues Ser-469 and Ser-532. Residues 539–604 (QAQAAEMKAL…EQHLEKMRLE (66 aa)) are a coiled coil.

In terms of assembly, interacts with PCM1, CEP290 and PCNT.

Its subcellular location is the cytoplasm. It localises to the cytoskeleton. The protein localises to the microtubule organizing center. It is found in the centrosome. The protein resides in the centriolar satellite. Its subcellular location is the cilium basal body. In terms of biological role, required for primary cilia formation and promotes the localization of the ciliopathy protein BBS4 to both centriolar satellites and cilia. The polypeptide is Coiled-coil domain-containing protein 13 (Mus musculus (Mouse)).